The primary structure comprises 160 residues: MSDEEHHFESKADAGASKTFPQQAGTIRKNGYIVIKNRPCKVMEVSTSKTGKHGHAKCHFVGIDIFNGKKLEDIVPSSHNCDVPHVNRTDYQLIDISEDGFVSLLTETGNTKDDLRLPTDENLLSQIKDGFAEGKDLVVSVMSAMGEERICSLKDIGPKN.

Residues M1–A12 are compositionally biased toward basic and acidic residues. The disordered stretch occupies residues M1–P21. K52 is subject to Hypusine.

The protein belongs to the eIF-5A family. Lys-53 undergoes hypusination, a unique post-translational modification that consists in the addition of a butylamino group from spermidine to lysine side chain, leading to the formation of the unusual amino acid hypusine. eIF-5As are the only known proteins to undergo this modification, which is essential for their function.

Translation factor that promotes translation elongation and termination, particularly upon ribosome stalling at specific amino acid sequence contexts. Binds between the exit (E) and peptidyl (P) site of the ribosome and promotes rescue of stalled ribosome: specifically required for efficient translation of polyproline-containing peptides as well as other motifs that stall the ribosome. Acts as a ribosome quality control (RQC) cofactor by joining the RQC complex to facilitate peptidyl transfer during CAT tailing step. This chain is Eukaryotic translation initiation factor 5A, found in Manihot esculenta (Cassava).